Consider the following 423-residue polypeptide: Serpin B12 (423 aa).

Positions 63 to 72 (LSKDEHKEPN) are enriched in basic and acidic residues. The segment at 63 to 106 (LSKDEHKEPNDPSPQSESKASDSSLEGQKQTSASQDQQGESTND) is disordered. A compositionally biased stretch (polar residues) spans 75-106 (SPQSESKASDSSLEGQKQTSASQDQQGESTND).

Belongs to the serpin family. Ov-serpin subfamily. Interacts with SLFN12; as part of a pathway regulating cell differentiation.

The protein resides in the cytoplasm. Its function is as follows. Inhibits trypsin and plasmin, but not thrombin, coagulation factor Xa, or urokinase-type plasminogen activator. May play a role in cell differentiation. This chain is Serpin B12 (Serpinb12), found in Mus musculus (Mouse).